A 38-amino-acid chain; its full sequence is Very early lactation protein (38 aa).

Homodimer. O-glycosylated. Contains sialic acid residues. As to expression, found in the whey fraction of milk (at protein level).

It is found in the secreted. The sequence is that of Very early lactation protein from Trichosurus vulpecula (Brush-tailed possum).